We begin with the raw amino-acid sequence, 384 residues long: MSPTYDVIVIGLGGMGSAAAHHLSARGARVLGLEKFGPVHNRGSSHGGSRITRQSYFEDPAYVPLLLRSYELYEEVERSTGREVATLSGGVMVGRPDSLTVAGSLRSATQWDLPHEMLDAKEIRRRFPTLNPSNDEVALYEKKAGLVRPENMVAAHLQLATRQGAELHFEEPMTRWEPYRDGVRVHTAENTYTAGQLVICPGAWAPQLLTDLGVPFTIERQVMYWFQPRHGVGPFRPENHPIYIWEDAEGVQVYGFPSIDGPDLGAKVAFFRKGVVCTPETIDRTVHDHEVQAMADHMSRCIPDLPGTFLKAATCMYSNTPDEHFVIARHPAHPDSVTVACGFSGHGFKFVPVVGEIVADLALTGTTAHPIGLFDPRRLAAAPA.

Residue aspartate 6–phenylalanine 36 coordinates FAD. At cysteine 315 the chain carries S-8alpha-FAD cysteine.

This sequence belongs to the MSOX/MTOX family. MSOX subfamily. As to quaternary structure, monomer. FAD serves as cofactor.

The protein resides in the cytoplasm. It catalyses the reaction sarcosine + O2 + H2O = formaldehyde + glycine + H2O2. In terms of biological role, catalyzes the oxidative demethylation of sarcosine. The polypeptide is Monomeric sarcosine oxidase (Streptomyces avermitilis (strain ATCC 31267 / DSM 46492 / JCM 5070 / NBRC 14893 / NCIMB 12804 / NRRL 8165 / MA-4680)).